Consider the following 503-residue polypeptide: Maturase K (503 aa).

It belongs to the intron maturase 2 family. MatK subfamily.

Its subcellular location is the plastid. It is found in the chloroplast. Functionally, usually encoded in the trnK tRNA gene intron. Probably assists in splicing its own and other chloroplast group II introns. The sequence is that of Maturase K from Rosa rugosa (Rugosa rose).